Consider the following 423-residue polypeptide: Zinc finger protein Gfi-1 (423 aa).

The interval M1–S20 is SNAG domain. Residues M1–S102 are disordered. Residues S20 and S57 each carry the phosphoserine modification. The span at S48 to S57 shows a compositional bias: basic and acidic residues. Positions R141–C258 are required for interaction with RELA. 6 consecutive C2H2-type zinc fingers follow at residues Y256–H279, F285–H307, F313–H335, Y341–H363, H369–H391, and F397–H420.

In terms of assembly, interacts with U2AF1L4. Component of RCOR-GFI-KDM1A-HDAC complexes. Interacts directly with RCOR1, KDM1A and HDAC2. Also interacts with HDAC1. regions. Interacts (via the zinc-finger domain) with ARIH2; the interaction prevents GFI1 ubiquitination and proteasomal degradation. Interacts with PIAS3; the interaction relieves the inhibitory effect of PIAS3 on STAT3-mediated transcriptional activity. Forms a complex with EHMT2 and HDAC1 to promote 'Lys-9' dimethylation of H3 (H3K9Me2) and repress expression of target genes. Interacts directly with EHMT2. Component of the GFI1-AJUBA-HDAC1 repressor complex. Interacts directly with AJUBA (via ITS LIM domains); the interaction results in the HDAC-dependent corepression of a subset of GFI1 target genes and, occurs independent of the SNAG domain. Interacts with SPI1; the interaction inhibits SPI1 transcriptional activity targeted at macrophage-specific genes, repressing macrophage differentiation of myeloid progenitor cells and promoting granulocyte commitment. Interacts with RUNX1T1; the interaction represses HDAC-mediated transcriptional activity. Interacts with RELA; the interaction occurs on liposaccharide (LPS) stimulation controls RELA DNA binding activity and regulates endotoxin-mediated TOLL-like receptor inflammatory response. Interacts (via the C-terminal zinc fingers) with ZBTB17; the interaction results in the recruitment of GFI1 to the CDKN1A/p21 promoter and repression of CDKN1A/p21 transcription. Ubiquitinated. As to expression, restricted to lymphoid tissues and testes in adult animals.

The protein localises to the nucleus. Its function is as follows. Transcription repressor essential for hematopoiesis. Functions in a cell-context and development-specific manner. Binds to 5'-TAAATCAC[AT]GCA-3' in the promoter region of a large number of genes. Component of several complexes, including the EHMT2-GFI1-HDAC1, AJUBA-GFI1-HDAC1 and RCOR-GFI-KDM1A-HDAC complexes, that suppress, via histone deacetylase (HDAC) recruitment, a number of genes implicated in multilineage blood cell development. Regulates neutrophil differentiation, promotes proliferation of lymphoid cells, and is required for granulocyte development. Inhibits SPI1 transcriptional activity at macrophage-specific genes, repressing macrophage differentiation of myeloid progenitor cells and promoting granulocyte commitment. Mediates, together with U2AF1L4, the alternative splicing of CD45 and controls T-cell receptor signaling. Regulates the endotoxin-mediated Toll-like receptor (TLR) inflammatory response by antagonizing RELA. Cooperates with CBFA2T2 to regulate ITGB1-dependent neurite growth. Controls cell-cycle progression by repressing CDKNIA/p21 transcription in response to TGFB1 via recruitment of GFI1 by ZBTB17 to the CDKNIA/p21 and CDKNIB promoters. Required for the maintenance of inner ear hair cells. In addition to its role in transcription, acts as a substrate adapter for PRMT1 in the DNA damage response: facilitates the recognition of TP53BP1 and MRE11 substrates by PRMT1, promoting their methylation and the DNA damage response. This chain is Zinc finger protein Gfi-1 (Gfi1), found in Rattus norvegicus (Rat).